Here is a 565-residue protein sequence, read N- to C-terminus: Glucose starvation modulator protein 1 (565 aa).

The zn(2)-C6 fungal-type DNA-binding region spans 20–48 (CVFCHQKHLQCSNERPCKNCVKRNIAHGC). 2 disordered regions span residues 63-106 (GVSG…ESSN) and 250-269 (QVSP…NTLS). Over residues 82–93 (SPLSTSMSPTDS) the composition is skewed to polar residues. Residues 252–269 (SPSPSNTSTSENNTNTLS) show a composition bias toward low complexity.

Belongs to the ERT1/acuK family.

It is found in the nucleus. In terms of biological role, transcription factor which regulates nonfermentable carbon utilization. The sequence is that of Glucose starvation modulator protein 1 (GSM1) from Candida dubliniensis (strain CD36 / ATCC MYA-646 / CBS 7987 / NCPF 3949 / NRRL Y-17841) (Yeast).